Consider the following 433-residue polypeptide: Probable mannan endo-1,4-beta-mannosidase F (433 aa).

The first 19 residues, 1–19, serve as a signal peptide directing secretion; sequence MKRQALTLIPLLGAAAAQS. Residues 20-53 enclose the CBM1 domain; it reads GPYGQCGGNDWSGATTCVSGYVCVYQNEWYSQCV. The tract at residues 56–82 is thr-rich linker; that stretch reads TATSSSTTLTTTTSATTRTTTTTTSTT. Residues 83–433 form a catalytic region; the sequence is SVPSSTNFPS…TEHMERIAAR (351 aa). Residue asparagine 97 is glycosylated (N-linked (GlcNAc...) asparagine). Substrate contacts are provided by tryptophan 142 and asparagine 255. Glutamate 256 functions as the Proton donor in the catalytic mechanism. Tyrosine 331 lines the substrate pocket. The Nucleophile role is filled by glutamate 364. Residue tryptophan 394 participates in substrate binding.

The protein belongs to the glycosyl hydrolase 5 (cellulase A) family.

The protein localises to the secreted. The catalysed reaction is Random hydrolysis of (1-&gt;4)-beta-D-mannosidic linkages in mannans, galactomannans and glucomannans.. Endo-1,4-mannanase, a crucial enzyme for depolymerization of seed galactomannans and wood galactoglucomannans. This Emericella nidulans (strain FGSC A4 / ATCC 38163 / CBS 112.46 / NRRL 194 / M139) (Aspergillus nidulans) protein is Probable mannan endo-1,4-beta-mannosidase F (manF).